An 84-amino-acid chain; its full sequence is Tenecin-1 (84 aa).

The N-terminal stretch at 1 to 19 is a signal peptide; sequence MKLTIFALVACFFILQIAA. A propeptide spanning residues 20-41 is cleaved from the precursor; that stretch reads FPLEEAATAEEIEQGEHIRVKR. Cystine bridges form between cysteine 44–cysteine 75, cysteine 61–cysteine 81, and cysteine 65–cysteine 83.

It belongs to the invertebrate defensin family. Type 1 subfamily.

It localises to the secreted. Its function is as follows. Bactericidal protein produced in response to injury. It is cytotoxic to Gram-positive bacteria. In Tenebrio molitor (Yellow mealworm beetle), this protein is Tenecin-1.